A 355-amino-acid polypeptide reads, in one-letter code: Phosphoribosylformylglycinamidine cyclo-ligase (355 aa).

This sequence belongs to the AIR synthase family.

It is found in the cytoplasm. It carries out the reaction 2-formamido-N(1)-(5-O-phospho-beta-D-ribosyl)acetamidine + ATP = 5-amino-1-(5-phospho-beta-D-ribosyl)imidazole + ADP + phosphate + H(+). It functions in the pathway purine metabolism; IMP biosynthesis via de novo pathway; 5-amino-1-(5-phospho-D-ribosyl)imidazole from N(2)-formyl-N(1)-(5-phospho-D-ribosyl)glycinamide: step 2/2. The protein is Phosphoribosylformylglycinamidine cyclo-ligase of Paraburkholderia phymatum (strain DSM 17167 / CIP 108236 / LMG 21445 / STM815) (Burkholderia phymatum).